A 233-amino-acid chain; its full sequence is Auxin-responsive protein IAA11 (233 aa).

2 disordered regions span residues 1–27 (MAGL…RSSG) and 46–100 (PAAV…PKAQ). The short motif at 11–15 (LRLGL) is the EAR-like (transcriptional repression) element. The segment covering 54 to 63 (GAQEDKEDAD) has biased composition (acidic residues). The PB1 domain occupies 122–217 (AALVKVSMDG…SCKRLRIMKG (96 aa)).

This sequence belongs to the Aux/IAA family. Homodimers and heterodimers. In terms of tissue distribution, highly expressed in etiolated shoots. Expressed in roots.

It is found in the nucleus. Aux/IAA proteins are short-lived transcriptional factors that function as repressors of early auxin response genes at low auxin concentrations. In Oryza sativa subsp. japonica (Rice), this protein is Auxin-responsive protein IAA11 (IAA11).